We begin with the raw amino-acid sequence, 62 residues long: ATP synthase subunit K, mitochondrial (62 aa).

Residues 14-30 (HHLAIATIGTVVALVAP) traverse the membrane as a helical segment.

As to quaternary structure, F-type ATP synthases have 2 components, the catalytic core F(1) and the membrane-embedded component F(0), linked together by a central stalk and a peripheral stalk. The central stalk, also called rotor shaft, is often seen as part of F(1). The peripheral stalk is seen as part of F(0). F(0) contains the membrane channel next to the rotor. F-type ATP synthases form dimers but each monomer functions independently in ATP generation. The dimer consists of 18 different polypeptides: ATP1 (subunit alpha, part of F(1), 3 molecules per monomer), ATP2 (subunit beta, part of F(1), 3 molecules per monomer), ATP3 (subunit gamma, part of the central stalk), ATP4 (subunit b, part of the peripheral stalk), ATP5/OSCP (subunit 5/OSCP, part of the peripheral stalk), ATP6 (subunit a, part of the peripheral stalk), ATP7 (subunit d, part of the peripheral stalk), ATP8 (subunit 8, part of the peripheral stalk), OLI1 (subunit c, part of the rotor, 10 molecules per monomer), ATP14 (subunit h, part of the peripheral stalk), ATP15 (subunit epsilon, part of the central stalk), ATP16 (subunit delta, part of the central stalk), ATP17 (subunit f, part of the peripheral stalk), ATP18 (subunit i/j, part of the peripheral stalk). Dimer-specific subunits are ATP19 (subunit k, at interface between monomers), ATP20 (subunit g, at interface between monomers), TIM11 (subunit e, at interface between monomers). Also contains subunit L.

It localises to the mitochondrion inner membrane. Functionally, mitochondrial membrane ATP synthase (F(1)F(0) ATP synthase or Complex V) produces ATP from ADP in the presence of a proton gradient across the membrane which is generated by electron transport complexes of the respiratory chain. F-type ATP synthases consist of two structural domains, F(1) - containing the extramembraneous catalytic core, and F(0) - containing the membrane proton channel, linked together by a central stalk and a peripheral stalk. During catalysis, ATP synthesis in the catalytic domain of F(1) is coupled via a rotary mechanism of the central stalk subunits to proton translocation. Part of the complex F(0) domain. Minor subunit located with subunit a/ATP6 in the membrane. The K chain binds the dimeric form by interacting with the G and E chains. This Pichia angusta (Yeast) protein is ATP synthase subunit K, mitochondrial.